Here is a 196-residue protein sequence, read N- to C-terminus: Ribonuclease HII (196 aa).

One can recognise an RNase H type-2 domain in the interval 9–196 (SLIAGVDEVG…APVKRAIGLK (188 aa)). Residues Asp15, Glu16, and Asp107 each contribute to the a divalent metal cation site.

Belongs to the RNase HII family. Mn(2+) serves as cofactor. Mg(2+) is required as a cofactor.

Its subcellular location is the cytoplasm. The enzyme catalyses Endonucleolytic cleavage to 5'-phosphomonoester.. Functionally, endonuclease that specifically degrades the RNA of RNA-DNA hybrids. The chain is Ribonuclease HII from Photorhabdus laumondii subsp. laumondii (strain DSM 15139 / CIP 105565 / TT01) (Photorhabdus luminescens subsp. laumondii).